Reading from the N-terminus, the 1147-residue chain is MACPWKFLFRVKSYQGDLKEEKDINNNVEKTPGAIPSPTTQDDPKSHKHQNGFPQFLTGTAQNVPESLDKLHVTPSTRPQHVRIKNWGNGEIFHDTLHHKATSDISCKSKLCMGSIMNSKSLTRGPRDKPTPVEELLPQAIEFINQYYGSFKEAKIEEHLARLEAVTKEIETTGTYQLTLDELIFATKMAWRNAPRCIGRIQWSNLQVFDARSCSTASEMFQHICRHILYATNSGNIRSAITVFPQRSDGKHDFRIWNSQLIRYAGYQMPDGTIRGDPATLEFTQLCIDLGWKPRYGRFDVLPLVLQAHGQDPEVFEIPPDLVLEVTMEHPKYEWFQELGLKWYALPAVANMLLEVGGLEFPACPFNGWYMGTEIGVRDFCDTQRYNILEEVGRRMGLETHTLASLWKDRAVTEINAAVLHSFQKQNVTIMDHHTASESFMKHMQNEYRARGGCPADWIWLVPPVSGSITPVFHQEMLNYVLSPFYYYQIEPWKTHIWQDEKLRPRRREIRFTVLVKAVFFASVLMRKVMASRVRATVLFATETGKSEALARDLAALFSYAFNTKVVCMEQYKANTLEEEQLLLVVTSTFGNGDCPSNGQTLKKSLFMMKELGHTFRYAVFGLGSSMYPQFCAFAHDIDQKLSHLGASQLAPTGEGDELSGQEDAFRSWAVQTFRAACETFDVRSKHCIQIPKRYTSNATWEPEQYKLTQSPESLDLNKALSSIHAKNVFTMRLKSLQNLQSEKSSRTTLLVQLTFEGSRGPSYLPGEHLGIFPGNQTALVQGILERVVDCSSPDQTVCLEVLDESGSYWVKDKRLPPCSLRQALTYFLDITTPPTQLQLHKLARFATEETHRQRLEALCQPSEYNDWKFSNNPTFLEVLEEFPSLRVPAAFLLSQLPILKPRYYSISSSQDHTPSEVHLTVAVVTYRTRDGQGPLHHGVCSTWINNLKPEDPVPCFVRSVSGFQLPEDPSQPCILIGPGTGIAPFRSFWQQRLHDSQHRGLKGGRMTLVFGCRHPEEDHLYQEEMQEMVRKGVLFQVHTGYSRLPGKPKVYVQDILQKELADEVFSVLHGEQGHLYVCGDVRMARDVATTLKKLVAAKLNLSEEQVEDYFFQLKSQKRYHEDIFGAVFSYGAKKGNTLEEPKGTRL.

Residues 22 to 51 (KDINNNVEKTPGAIPSPTTQDDPKSHKHQN) form a disordered region. The DINNN-motif; mediates interaction with SPSB1, SPSB2 and SPSB4 motif lies at 23–27 (DINNN). Zn(2+) is bound by residues Cys107 and Cys112. Residue Ser115 participates in (6R)-L-erythro-5,6,7,8-tetrahydrobiopterin binding. Cys197 is a binding site for heme b. Residues Gln260, Trp369, Tyr370, and Glu374 each coordinate L-arginine. 4 residues coordinate (6R)-L-erythro-5,6,7,8-tetrahydrobiopterin: Arg378, Ile459, Trp460, and Phe473. Tyr488 is a heme b binding site. The interval 512-532 (FTVLVKAVFFASVLMRKVMAS) is calmodulin-binding. A Flavodoxin-like domain is found at 536-674 (ATVLFATETG…AFRSWAVQTF (139 aa)). FMN is bound by residues Thr542, Glu543, Thr544, Lys546, and Ser547. The residue at position 564 (Thr564) is a Phosphothreonine. A Phosphotyrosine modification is found at Tyr572. FMN contacts are provided by Ser588, Thr589, Ser625, Cys632, Glu658, and Gln662. Residues 727–967 (KNVFTMRLKS…VRSVSGFQLP (241 aa)) enclose the FAD-binding FR-type domain. Arg747 contacts NADP(+). 6 residues coordinate FAD: His769, Arg903, Tyr905, Ser906, Thr921, and Ala923. Thr926 contacts NADP(+). Tyr927, Val940, Cys941, and Ser942 together coordinate FAD. Residues Thr981, Arg1014, Ser1043, Arg1044, Lys1050, Tyr1052, Gln1054, and Asp1087 each contribute to the NADP(+) site.

This sequence belongs to the NOS family. In terms of assembly, homodimer. Interacts with NHERF1. Interacts with GAPDH; induced by oxidatively-modified low-densitity lipoprotein (LDL(ox)). Interacts with S100A8 and S100A9 to form the iNOS-S100A8/9 transnitrosylase complex. Interacts with SPSB1, SPSB2 and SPSB4. Interacts with ELOC and CUL5 in the presence of SPSB1 or SPSB2 or SPSB4. Forms a complex with ASL, ASS1 and HSP90AA1; the complex regulates cell-autonomous L-arginine synthesis and citrulline recycling while channeling extracellular L-arginine to nitric oxide synthesis pathway. Requires heme b as cofactor. It depends on FAD as a cofactor. FMN is required as a cofactor. The cofactor is (6R)-L-erythro-5,6,7,8-tetrahydrobiopterin. Polyubiquitinated; mediated by SPSB1, SPSB2 and SPSB4, leading to proteasomal degradation. In normal kidney, expressed primarily in the medullary thick ascending limb, with minor amounts in the medullary collecting duct and vasa recta bundle.

Its subcellular location is the cytoplasm. It is found in the cytosol. It catalyses the reaction 2 L-arginine + 3 NADPH + 4 O2 + H(+) = 2 L-citrulline + 2 nitric oxide + 3 NADP(+) + 4 H2O. Its activity is regulated as follows. Not stimulated by calcium/calmodulin. Aspirin inhibits expression and function of this enzyme and effects may be exerted at the level of translational/post-translational modification and directly on the catalytic activity. Produces nitric oxide (NO) which is a messenger molecule with diverse functions throughout the body. In macrophages, NO mediates tumoricidal and bactericidal actions. Also has nitrosylase activity and mediates cysteine S-nitrosylation of cytoplasmic target proteins such PTGS2/COX2. As component of the iNOS-S100A8/9 transnitrosylase complex involved in the selective inflammatory stimulus-dependent S-nitrosylation of GAPDH implicated in regulation of the GAIT complex activity and probably multiple targets including ANXA5, EZR, MSN and VIM. Involved in inflammation, enhances the synthesis of pro-inflammatory mediators such as IL6 and IL8. The polypeptide is Nitric oxide synthase, inducible (Nos2) (Rattus norvegicus (Rat)).